A 456-amino-acid polypeptide reads, in one-letter code: 1,3-beta-glucanosyltransferase gas4 (456 aa).

Residues 1 to 25 (MGVANIIYALFLLGPSIFLKATAQT) form the signal peptide. Cysteines 68 and 97 form a disulfide. (1,3-beta-D-glucosyl)n contacts are provided by Tyr86, Asn156, Glu157, Asp197, and Arg202. Glu157 (proton donor) is an active-site residue. Intrachain disulfides connect Cys211–Cys350 and Cys229–Cys260. Asn248 carries N-linked (GlcNAc...) asparagine glycosylation. The active-site Nucleophile is the Glu257. Residue Tyr296 participates in (1,3-beta-D-glucosyl)n binding. 2 disordered regions span residues 334-353 (NPKG…CPAN) and 384-434 (IEGP…ESGS). Residues Asn353 and Asn415 are each glycosylated (N-linked (GlcNAc...) asparagine). Low complexity predominate over residues 417 to 434 (TSTTSYTSGMTSSSESGS). Ser432 carries the GPI-anchor amidated serine lipid modification. Residues 433–456 (GSSKIGVAFCQALFITVLIATLSF) constitute a propeptide, removed in mature form.

Belongs to the glycosyl hydrolase 72 family.

It localises to the cell membrane. Functionally, splits internally a 1,3-beta-glucan molecule and transfers the newly generated reducing end (the donor) to the non-reducing end of another 1,3-beta-glucan molecule (the acceptor) forming a 1,3-beta linkage, resulting in the elongation of 1,3-beta-glucan chains in the cell wall. Involved in spore wall assembly. The protein is 1,3-beta-glucanosyltransferase gas4 (gas4) of Schizosaccharomyces pombe (strain 972 / ATCC 24843) (Fission yeast).